Consider the following 225-residue polypeptide: Ribonuclease 3 (225 aa).

An RNase III domain is found at I5–D127. Residue E40 participates in Mg(2+) binding. D44 is an active-site residue. Residues D113 and E116 each coordinate Mg(2+). E116 is a catalytic residue. Residues D154 to N224 enclose the DRBM domain. The interval G204–G225 is disordered. A compositionally biased stretch (low complexity) spans Q212–G225.

The protein belongs to the ribonuclease III family. In terms of assembly, homodimer. Mg(2+) is required as a cofactor.

The protein resides in the cytoplasm. The catalysed reaction is Endonucleolytic cleavage to 5'-phosphomonoester.. In terms of biological role, digests double-stranded RNA. Involved in the processing of primary rRNA transcript to yield the immediate precursors to the large and small rRNAs (23S and 16S). Processes some mRNAs, and tRNAs when they are encoded in the rRNA operon. Processes pre-crRNA and tracrRNA of type II CRISPR loci if present in the organism. The polypeptide is Ribonuclease 3 (Vibrio parahaemolyticus serotype O3:K6 (strain RIMD 2210633)).